The chain runs to 104 residues: Small ubiquitin-related modifier 3 (104 aa).

Residues K5 and K7 each participate in a glycyl lysine isopeptide (Lys-Gly) (interchain with G-Cter in SUMO2) cross-link. Residue K11 forms a Glycyl lysine isopeptide (Lys-Gly) (interchain with G-Cter in SUMO); alternate linkage. K11 is covalently cross-linked (Glycyl lysine isopeptide (Lys-Gly) (interchain with G-Cter in SUMO2); alternate). A Ubiquitin-like domain is found at 15-92; that stretch reads DHINLKVAGQ…IDVFQQQTGG (78 aa). G92 participates in a covalent cross-link: Glycyl lysine isopeptide (Gly-Lys) (interchain with K-? in acceptor proteins). A propeptide spanning residues 93 to 104 is cleaved from the precursor; the sequence is SRVASCLLGSGL.

It belongs to the ubiquitin family. SUMO subfamily. Interacts with SAE2 and UBE2I. Covalently attached to a number of proteins. Interacts with USP25 (via ts SIM domain); the interaction sumoylates USP25 and inhibits its ubiquitin hydrolyzing activity. Interacts with BMAL1. Polymeric chains can be formed through Lys-11 cross-linking. In terms of processing, cleavage of precursor form by SENP1, SENP2 or SENP5 is necessary for function.

The protein resides in the cytoplasm. It localises to the nucleus. The protein localises to the PML body. Functionally, ubiquitin-like protein which can be covalently attached to target lysines either as a monomer or as a lysine-linked polymer. Does not seem to be involved in protein degradation and may function as an antagonist of ubiquitin in the degradation process. Plays a role in a number of cellular processes such as nuclear transport, DNA replication and repair, mitosis and signal transduction. Covalent attachment to its substrates requires prior activation by the E1 complex SAE1-SAE2 and linkage to the E2 enzyme UBE2I, and can be promoted by an E3 ligase such as PIAS1-4, RANBP2 or CBX4. Plays a role in the regulation of sumoylation status of SETX. The sequence is that of Small ubiquitin-related modifier 3 (SUMO3) from Bos taurus (Bovine).